A 322-amino-acid chain; its full sequence is Cytochrome c biogenesis protein CcsA (322 aa).

8 consecutive transmembrane segments (helical) span residues N19–V39, L43–L63, F72–I92, V104–L124, M150–L170, T230–N250, T264–L281, and A291–L311.

It belongs to the CcmF/CycK/Ccl1/NrfE/CcsA family. As to quaternary structure, may interact with Ccs1.

It localises to the plastid. The protein localises to the chloroplast thylakoid membrane. In terms of biological role, required during biogenesis of c-type cytochromes (cytochrome c6 and cytochrome f) at the step of heme attachment. This is Cytochrome c biogenesis protein CcsA from Heterosigma akashiwo (strain NIES-293 / 8280G21-1).